Consider the following 375-residue polypeptide: MTTATESEAPRIHKGLAGVVVDTTAISKVVPETNSLTYRGYPVQDLAAQCSFEQVAYLLWHGELPTDQLALFSQRERASRRIDRSMQALLAKLPDNCHPMDVVRTAISYLGAEDLEEDVDTAEANYAKSLRMFAVLPTIVATDIRRRQGLTPIPPHSQLGYAQNFLNMCFGEVPEPVVVRAFEQSMVLYAEHSFNASTFAARVVTSTQSDIYSAVTAAIGALKGSLHGGANEAVMHDMLEIGSAEKAPEWLHGKLSRKEKVMGFGHRVYKNGDSRVPTMKVALEQVAQVRDGQRWLDIYNTLESAMFAATRIKPNLDFPTGPAYYLMDFPIESFTPLFVMSRITGWTAHIMEQAASNALIRPLSEYSGQPQRSLV.

Active-site residues include histidine 266 and aspartate 317.

It belongs to the citrate synthase family. Homohexamer.

The enzyme catalyses oxaloacetate + acetyl-CoA + H2O = citrate + CoA + H(+). It functions in the pathway carbohydrate metabolism; tricarboxylic acid cycle; isocitrate from oxaloacetate: step 1/2. Its activity is regulated as follows. Allosterically inhibited by NADH. The protein is Citrate synthase (gltA) of Mycolicibacterium smegmatis (Mycobacterium smegmatis).